Consider the following 588-residue polypeptide: Neopullulanase (588 aa).

Ca(2+) contacts are provided by Asn147, Asn149, Ser153, Gly172, and Asp174. His247 and Arg326 together coordinate substrate. Asp328 functions as the Nucleophile in the catalytic mechanism. The active-site Proton donor is the Glu357. Substrate is bound by residues 423–424 (HD), Asp468, and Arg472.

It belongs to the glycosyl hydrolase 13 family. Homodimer. The cofactor is Ca(2+).

The enzyme catalyses Hydrolysis of pullulan to panose (6-alpha-D-glucosylmaltose).. Hydrolyzes pullulan efficiently but only a small amount of starch. Endohydrolysis of 1,4-alpha-glucosidic linkages in pullulan to form panose. Also cleaves (1-6)-alpha-glucosidic linkages to form maltotriose. This chain is Neopullulanase (nplT), found in Geobacillus stearothermophilus (Bacillus stearothermophilus).